Reading from the N-terminus, the 80-residue chain is Exodeoxyribonuclease 7 small subunit (80 aa).

It belongs to the XseB family. In terms of assembly, heterooligomer composed of large and small subunits.

Its subcellular location is the cytoplasm. The enzyme catalyses Exonucleolytic cleavage in either 5'- to 3'- or 3'- to 5'-direction to yield nucleoside 5'-phosphates.. In terms of biological role, bidirectionally degrades single-stranded DNA into large acid-insoluble oligonucleotides, which are then degraded further into small acid-soluble oligonucleotides. This Erwinia tasmaniensis (strain DSM 17950 / CFBP 7177 / CIP 109463 / NCPPB 4357 / Et1/99) protein is Exodeoxyribonuclease 7 small subunit.